Consider the following 389-residue polypeptide: Succinate--CoA ligase [ADP-forming] subunit beta (389 aa).

An ATP-grasp domain is found at 9–236 (KELFAKHEVP…KDATDPLELK (228 aa)). Residues lysine 45, 52-54 (GRG), serine 94, and glutamate 99 each bind ATP. 2 residues coordinate Mg(2+): asparagine 191 and aspartate 205. Residues asparagine 256 and 318 to 320 (GIT) each bind substrate.

It belongs to the succinate/malate CoA ligase beta subunit family. As to quaternary structure, heterotetramer of two alpha and two beta subunits. Mg(2+) is required as a cofactor.

It catalyses the reaction succinate + ATP + CoA = succinyl-CoA + ADP + phosphate. It carries out the reaction GTP + succinate + CoA = succinyl-CoA + GDP + phosphate. It participates in carbohydrate metabolism; tricarboxylic acid cycle; succinate from succinyl-CoA (ligase route): step 1/1. Succinyl-CoA synthetase functions in the citric acid cycle (TCA), coupling the hydrolysis of succinyl-CoA to the synthesis of either ATP or GTP and thus represents the only step of substrate-level phosphorylation in the TCA. The beta subunit provides nucleotide specificity of the enzyme and binds the substrate succinate, while the binding sites for coenzyme A and phosphate are found in the alpha subunit. The polypeptide is Succinate--CoA ligase [ADP-forming] subunit beta (Rhodococcus opacus (strain B4)).